A 312-amino-acid polypeptide reads, in one-letter code: Protein-glutamate methylesterase/protein-glutamine glutaminase (312 aa).

The Response regulatory domain maps to 5–122; the sequence is RVLSVDDSAL…REGMLAYSEM (118 aa). Asp-56 carries the 4-aspartylphosphate modification. In terms of domain architecture, CheB-type methylesterase spans 152–307; sequence LLSSEKLIAI…QQMLAKISAG (156 aa). Active-site residues include Ser-164, His-190, and Asp-249.

Belongs to the CheB family. In terms of processing, phosphorylated by CheA. Phosphorylation of the N-terminal regulatory domain activates the methylesterase activity.

It is found in the cytoplasm. The enzyme catalyses [protein]-L-glutamate 5-O-methyl ester + H2O = L-glutamyl-[protein] + methanol + H(+). It carries out the reaction L-glutaminyl-[protein] + H2O = L-glutamyl-[protein] + NH4(+). Its function is as follows. Involved in chemotaxis. Part of a chemotaxis signal transduction system that modulates chemotaxis in response to various stimuli. Catalyzes the demethylation of specific methylglutamate residues introduced into the chemoreceptors (methyl-accepting chemotaxis proteins or MCP) by CheR. Also mediates the irreversible deamidation of specific glutamine residues to glutamic acid. In Shigella boydii serotype 4 (strain Sb227), this protein is Protein-glutamate methylesterase/protein-glutamine glutaminase.